Here is a 506-residue protein sequence, read N- to C-terminus: Phase 2 flagellin (506 aa).

The protein belongs to the bacterial flagellin family.

The protein resides in the secreted. It localises to the bacterial flagellum. Flagellin is the subunit protein which polymerizes to form the filaments of bacterial flagella. This is Phase 2 flagellin (fljB) from Salmonella typhimurium (strain LT2 / SGSC1412 / ATCC 700720).